We begin with the raw amino-acid sequence, 453 residues long: Frizzled/smoothened-like sans CRD protein G (453 aa).

The first 24 residues, 1–24 (MIYILKNFIIILFFLLIILKRIES), serve as a signal peptide directing secretion. The Extracellular portion of the chain corresponds to 25 to 89 (QSLPSLPSPT…PFFTLDEWNK (65 aa)). N-linked (GlcNAc...) asparagine glycans are attached at residues Asn49 and Asn67. The chain crosses the membrane as a helical span at residues 90 to 110 (FLYMSLVMGTISFLCGLFLLI). The Cytoplasmic segment spans residues 111 to 124 (TYSPIVNKTHNRHT). Residues 125–145 (IGVMCMSFGVCLAMCSDMWNF) traverse the membrane as a helical segment. At 146–170 (GSNFTDQKSICPSPGQYLTTSNSRC) the chain is on the extracellular side. Asn148 carries N-linked (GlcNAc...) asparagine glycosylation. Residues 171-191 (LGSGIVLQFGGVFGFLNWTLL) traverse the membrane as a helical segment. At 192 to 209 (SFDLFMNIKGIITKNYDK) the chain is on the cytoplasmic side. A helical transmembrane segment spans residues 210 to 230 (YYFVATFIIAIIFTFVPIVND). Residues 231–250 (QYSMSYIGLGCWLGSAVYQL) lie on the Extracellular side of the membrane. A helical membrane pass occupies residues 251–271 (IFFWILLSICLIVSSVFIILI). At 272–296 (LKEIYIIIKQSKQKTSLKGNIRPLL) the chain is on the cytoplasmic side. Residues 297–317 (CITVTSFAFFYMFFYYISIVI) traverse the membrane as a helical segment. Over 318-352 (EGDYYERILNEYTDCLMDPTKDVSECKFPRMSVAN) the chain is Extracellular. The chain crosses the membrane as a helical span at residues 353-373 (EFVFLLCLRLLGIGAFIFYGI). Over 374–453 (NKEVKKIWLN…DDNFKPIIIK (80 aa)) the chain is Cytoplasmic.

It belongs to the G-protein coupled receptor Fz/Smo family.

It is found in the membrane. This Dictyostelium discoideum (Social amoeba) protein is Frizzled/smoothened-like sans CRD protein G (fscG).